The sequence spans 154 residues: Aspartate carbamoyltransferase regulatory chain (154 aa).

Positions 109, 114, 138, and 141 each coordinate Zn(2+).

The protein belongs to the PyrI family. Contains catalytic and regulatory chains. Zn(2+) is required as a cofactor.

In terms of biological role, involved in allosteric regulation of aspartate carbamoyltransferase. This Photorhabdus laumondii subsp. laumondii (strain DSM 15139 / CIP 105565 / TT01) (Photorhabdus luminescens subsp. laumondii) protein is Aspartate carbamoyltransferase regulatory chain.